The sequence spans 152 residues: Arginine repressor (152 aa).

This sequence belongs to the ArgR family.

It is found in the cytoplasm. It functions in the pathway amino-acid biosynthesis; L-arginine biosynthesis [regulation]. Regulates arginine biosynthesis genes. The polypeptide is Arginine repressor (Lactiplantibacillus plantarum (strain ATCC BAA-793 / NCIMB 8826 / WCFS1) (Lactobacillus plantarum)).